The sequence spans 309 residues: Glutaminase (309 aa).

Substrate-binding residues include Ser64, Asn114, Glu160, Asn167, Tyr191, Tyr243, and Val261.

It belongs to the glutaminase family. In terms of assembly, homotetramer.

It carries out the reaction L-glutamine + H2O = L-glutamate + NH4(+). This is Glutaminase from Rhizobium leguminosarum bv. trifolii (strain WSM2304).